Here is a 151-residue protein sequence, read N- to C-terminus: MKRNNKSAIALIALSLLALSSGAAFAGHHWGNNDGMWQQGGSPLTTEQQATAQKIYDDYYTQTSALRQQLISKRYEYNALLTASSPDTAKINAVAKEMESLGQKLDEQRVKRDVAMAQAGIPRGAGVGYGGCGGYGGGYHRGGGHMGMGNW.

A signal peptide spans 1–26 (MKRNNKSAIALIALSLLALSSGAAFA).

This sequence belongs to the ZraP family.

It localises to the periplasm. Its function is as follows. Part of the Zra signaling pathway, an envelope stress response (ESR) system composed of the periplasmic accessory protein ZraP, the histidine kinase ZraS and the transcriptional regulator ZraR. The ZraPSR system contributes to antibiotic resistance and is important for membrane integrity in the presence of membrane-targeting biocides. ZraP acts as a modulator which has both a regulatory and a chaperone function. The zinc-bound form of ZraP modulates the response of the ZraPSR system by inhibiting the expression of the zra genes, probably by interacting with ZraS. In Salmonella typhi, this protein is Signaling pathway modulator ZraP (zraP).